A 334-amino-acid polypeptide reads, in one-letter code: Leucine-rich repeat-containing protein 39 (334 aa).

Positions A10–V47 form a coiled coil. LRR repeat units lie at residues Q84 to F105, N107 to L128, R130 to C151, S153 to L176, K177 to M198, A200 to M221, N223 to M244, N246 to M267, and N269 to E290.

Interacts with MYH7 (via C-terminus).

It is found in the cytoplasm. The protein resides in the myofibril. The protein localises to the sarcomere. Its subcellular location is the m line. In terms of biological role, component of the sarcomeric M-band which plays a role in myocyte response to biomechanical stress. May regulate expression of other M-band proteins via an SRF-dependent pathway. Important for normal contractile function in heart. This chain is Leucine-rich repeat-containing protein 39, found in Bos taurus (Bovine).